We begin with the raw amino-acid sequence, 234 residues long: NLP effector protein 10 (234 aa).

The first 17 residues, 1-17, serve as a signal peptide directing secretion; the sequence is MFKTFIIAAVAVATVRA. The N-linked (GlcNAc...) asparagine glycan is linked to Asn65. Positions 101 to 111 match the Conserved undecapeptide motif I motif; sequence AIMYSWYFPKD. Positions 118–124 match the Hepta-peptide GHRHDWE motif II motif; that stretch reads GHRHDWE.

The protein belongs to the Necrosis inducing protein (NPP1) family.

The protein resides in the secreted. Its function is as follows. Secreted effector that contributes moderately to virulence during infection by P.capsici. Does not cause visible reaction of C.annuum for several days after inoculation, but by 7 days after inoculation, small necrotic lesions become visible. Leads only to chlorotic areas, without necrosis at 7 days after non-host N.benthamiana leaves infection. The protein is NLP effector protein 10 of Phytophthora capsici.